A 403-amino-acid chain; its full sequence is Protein-export membrane protein SecD (403 aa).

The next 6 helical transmembrane spans lie at 13 to 33, 245 to 265, 285 to 305, 306 to 326, 347 to 367, and 368 to 388; these read LLVI…KGVN, FLKM…VIIA, VVFL…PALA, GIIL…DEIV, VVLA…VAGM, and GLLK…VVIT.

This sequence belongs to the SecD/SecF family. SecD subfamily. Part of the protein translocation apparatus. Forms a complex with SecF.

The protein localises to the cell membrane. Its function is as follows. Involved in protein export. The chain is Protein-export membrane protein SecD from Methanopyrus kandleri (strain AV19 / DSM 6324 / JCM 9639 / NBRC 100938).